Here is a 395-residue protein sequence, read N- to C-terminus: Vacuolar protease A (395 aa).

The N-terminal stretch at 1 to 18 (MKGSLLLAGATLLGCTSA) is a signal peptide. The propeptide at 19 to 72 (KLHSLKLKKVSLKEQLEHADIDVQIKSLGQKYMGIRPGQHEQQMFKEQTPIEAE) is activation peptide. Positions 87 to 392 (YFSEISIGTP…DLGKGTVGLA (306 aa)) constitute a Peptidase A1 domain. The active site involves aspartate 105. Cysteine 118 and cysteine 123 are oxidised to a cystine. An N-linked (GlcNAc...) asparagine glycan is attached at asparagine 140. Residue aspartate 289 is part of the active site. Residues cysteine 318 and cysteine 351 are joined by a disulfide bond. An N-linked (GlcNAc...) asparagine glycan is attached at asparagine 335.

It belongs to the peptidase A1 family.

The protein resides in the vacuole lumen. Its subcellular location is the secreted. The catalysed reaction is Hydrolysis of proteins with broad specificity for peptide bonds. Cleaves -Leu-Leu-|-Val-Tyr- bond in a synthetic substrate. Does not act on esters of Tyr or Arg.. Vacuolar aspartic endopeptidase which is probably also secreted and contributes to virulence. In Arthroderma otae (strain ATCC MYA-4605 / CBS 113480) (Microsporum canis), this protein is Vacuolar protease A (PEP2).